We begin with the raw amino-acid sequence, 398 residues long: Argininosuccinate synthase (398 aa).

8 to 16 provides a ligand contact to ATP; the sequence is AYSGGLDTS. Residue Tyr87 participates in L-citrulline binding. Gly117 contacts ATP. The L-aspartate site is built by Thr119, Asn123, and Asp124. Asn123 lines the L-citrulline pocket. L-citrulline contacts are provided by Arg127, Ser175, Glu260, and Tyr272.

This sequence belongs to the argininosuccinate synthase family. Type 1 subfamily. Homotetramer.

The protein resides in the cytoplasm. It carries out the reaction L-citrulline + L-aspartate + ATP = 2-(N(omega)-L-arginino)succinate + AMP + diphosphate + H(+). The protein operates within amino-acid biosynthesis; L-arginine biosynthesis; L-arginine from L-ornithine and carbamoyl phosphate: step 2/3. This chain is Argininosuccinate synthase, found in Mycobacterium ulcerans (strain Agy99).